A 183-amino-acid chain; its full sequence is Apo-citrate lyase phosphoribosyl-dephospho-CoA transferase (183 aa).

This sequence belongs to the CitX family.

The enzyme catalyses apo-[citrate lyase ACP] + 2'-(5''-triphospho-alpha-D-ribosyl)-3'-dephospho-CoA = holo-[citrate lyase ACP] + diphosphate. Transfers 2-(5''-triphosphoribosyl)-3'-dephosphocoenzyme-A on a serine residue to the apo-acyl carrier protein (gamma chain) of the citrate lyase to yield holo-acyl carrier protein. In Escherichia coli O45:K1 (strain S88 / ExPEC), this protein is Apo-citrate lyase phosphoribosyl-dephospho-CoA transferase.